The sequence spans 341 residues: NADH-quinone oxidoreductase subunit H 1 (341 aa).

The next 8 helical transmembrane spans lie at 13–33, 82–102, 115–135, 161–181, 190–210, 248–268, 277–297, and 313–333; these read LVVI…IAYI, GLFL…WAVI, VGVL…IMAG, IGFV…TAIV, MLGW…VSAL, YVAI…GWLP, WVPG…LFAM, and LGWK…ASVL.

This sequence belongs to the complex I subunit 1 family. In terms of assembly, NDH-1 is composed of 14 different subunits. Subunits NuoA, H, J, K, L, M, N constitute the membrane sector of the complex.

Its subcellular location is the cell inner membrane. It catalyses the reaction a quinone + NADH + 5 H(+)(in) = a quinol + NAD(+) + 4 H(+)(out). NDH-1 shuttles electrons from NADH, via FMN and iron-sulfur (Fe-S) centers, to quinones in the respiratory chain. The immediate electron acceptor for the enzyme in this species is believed to be ubiquinone. Couples the redox reaction to proton translocation (for every two electrons transferred, four hydrogen ions are translocated across the cytoplasmic membrane), and thus conserves the redox energy in a proton gradient. This subunit may bind ubiquinone. This is NADH-quinone oxidoreductase subunit H 1 from Rhodopseudomonas palustris (strain ATCC BAA-98 / CGA009).